Here is a 141-residue protein sequence, read N- to C-terminus: Protein E6 (141 aa).

2 zinc fingers span residues 27–64 (CRFC…CSSC) and 101–137 (CKFC…CRHC).

Belongs to the papillomaviridae E6 protein family. In terms of assembly, forms homodimers. Interacts with ubiquitin-protein ligase UBE3A/E6-AP; this interaction stimulates UBE3A ubiquitin activity. Interacts with host BAK1.

The protein resides in the host cytoplasm. It localises to the host nucleus. Functionally, plays a major role in the induction and maintenance of cellular transformation. E6 associates with host UBE3A/E6-AP ubiquitin-protein ligase and modulates its activity. Protects host keratinocytes from apoptosis by mediating the degradation of host BAK1. May also inhibit host immune response. This is Protein E6 from Human papillomavirus 15.